The following is a 389-amino-acid chain: Tubby-like F-box protein 11 (389 aa).

An F-box domain is found at 36–82 (DYRWSEIPEELLREILIRVEAADGGGWPSRRSVVACAGVCRGWRLLM). Positions 250-289 (STMEPQGVASEPSEFPLLGTRSTLSRSQSKPLRSSSSHLK) are disordered. Low complexity predominate over residues 273 to 286 (LSRSQSKPLRSSSS).

It belongs to the TUB family. As to expression, ubiquitous.

This is Tubby-like F-box protein 11 from Arabidopsis thaliana (Mouse-ear cress).